The following is a 365-amino-acid chain: Class I histocompatibility antigen, B alpha chain (365 aa).

An N-terminal signal peptide occupies residues 1–24; it reads MTVMAPRTLLLLLSGALVLTETWA. The alpha-1 stretch occupies residues 25–114; it reads GSHSMRYFST…ALGYYNQSEA (90 aa). Residues 25–308 are Extracellular-facing; it reads GSHSMRYFST…EPPSQPTIPI (284 aa). N-linked (GlcNAc...) asparagine glycosylation is present at N110. The segment at 115–206 is alpha-2; the sequence is GSHTIQMMSG…ENGKETLQRA (92 aa). 2 disulfides stabilise this stretch: C125–C188 and C227–C283. The segment at 207-298 is alpha-3; the sequence is EPPKTHVTHH…GLPEPLTLRW (92 aa). The 89-residue stretch at 209-297 folds into the Ig-like C1-type domain; it reads PKTHVTHHPV…EGLPEPLTLR (89 aa). The connecting peptide stretch occupies residues 299–308; that stretch reads EPPSQPTIPI. The chain crosses the membrane as a helical span at residues 309 to 332; that stretch reads MGIVAILAILGAVVTGAVVTAVMW. At 333–365 the chain is on the cytoplasmic side; the sequence is RKKSSDKKGGSYSQAARSDSAQGSDVSLTACKV. The interval 337–361 is disordered; the sequence is SDKKGGSYSQAARSDSAQGSDVSLT. Residues 346 to 359 are compositionally biased toward polar residues; that stretch reads QAARSDSAQGSDVS. 2 positions are modified to phosphoserine: S356 and S359.

It belongs to the MHC class I family. Heterodimer of an alpha chain and a beta chain (beta-2-microglobulin).

It localises to the membrane. In terms of biological role, involved in the presentation of foreign antigens to the immune system. This is Class I histocompatibility antigen, B alpha chain from Saguinus oedipus (Cotton-top tamarin).